The following is a 69-amino-acid chain: MKNSAAREAFKGANHPAGMVSEEELKALVGGNDVNPETTPATTSSWTCITAGVTVSASLCPTTKCTSRC.

Residues 1 to 37 (MKNSAAREAFKGANHPAGMVSEEELKALVGGNDVNPE) constitute a propeptide that is removed on maturation. Thr-38 is subject to 2-oxobutanoic acid. Thr-39, Thr-42, and Thr-43 each carry (Z)-2,3-didehydrobutyrine. Positions 44 to 48 (SSWTC) form a cross-link, lanthionine (Ser-Cys). Ser-45 is subject to 2,3-didehydroalanine (Ser). (Z)-2,3-didehydrobutyrine occurs at positions 50 and 54. Positions 56–60 (SASLC) form a cross-link, lanthionine (Ser-Cys). 2 consecutive cross-links (beta-methyllanthionine (Thr-Cys)) follow at residues 62–65 (TTKC) and 66–69 (TSRC). The residue at position 63 (Thr-63) is a (Z)-2,3-didehydrobutyrine.

Post-translationally, maturation of lantibiotics involves the enzymatic conversion of Thr, and Ser into dehydrated AA and the formation of thioether bonds with cysteine. This is followed by membrane translocation and cleavage of the modified precursor.

Its subcellular location is the secreted. The protein localises to the cell wall. Functionally, lanthionine-containing peptide antibiotic (lantibiotic) active on Gram-positive bacteria. The bactericidal activity of lantibiotics is based on depolarization of energized bacterial cytoplasmic membranes, initiated by the formation of aqueous transmembrane pores. When present individually, LchA2 exhibits activity towards L.lactis HP. When combined with LchA1, it displays activity towards a broad spectrum of non-pathogenic and pathogenic Gram-positive bacteria including strains of L.monocytogenes, methicillin-resistant S.aureus, S.pneumoniae and strains of vancomycin-resistant enterococci, but not towards E.faecium L4001 and BM4147-1. Combined LchA1 and LchA2 peptides also inhibit Bacillus sp. HIL-Y85/54728, L.lactis DPC3417 and B.halodurans C-125, which produce lantibiotics themselves. Inactivated by proteinase K and pronase E, but not by trypsin and chymotrypsin. The polypeptide is Lantibiotic lichenicidin A2 (Bacillus licheniformis (strain ATCC 14580 / DSM 13 / JCM 2505 / CCUG 7422 / NBRC 12200 / NCIMB 9375 / NCTC 10341 / NRRL NRS-1264 / Gibson 46)).